Consider the following 425-residue polypeptide: Tyrosine--tRNA ligase (425 aa).

Y33 lines the L-tyrosine pocket. The 'HIGH' region motif lies at 38–47 (PTADSLHLGN). 2 residues coordinate L-tyrosine: Y170 and Q174. A 'KMSKS' region motif is present at residues 230–234 (KFGKS). K233 lines the ATP pocket. The S4 RNA-binding domain occupies 356 to 422 (KKLIDLLVET…GKKNKMIIRL (67 aa)).

The protein belongs to the class-I aminoacyl-tRNA synthetase family. TyrS type 1 subfamily. As to quaternary structure, homodimer.

It localises to the cytoplasm. The enzyme catalyses tRNA(Tyr) + L-tyrosine + ATP = L-tyrosyl-tRNA(Tyr) + AMP + diphosphate + H(+). Its function is as follows. Catalyzes the attachment of tyrosine to tRNA(Tyr) in a two-step reaction: tyrosine is first activated by ATP to form Tyr-AMP and then transferred to the acceptor end of tRNA(Tyr). The chain is Tyrosine--tRNA ligase from Protochlamydia amoebophila (strain UWE25).